The primary structure comprises 620 residues: Sorbicillinoid biosynthetic cluster transcription factor 1 (620 aa).

Residues 10 to 37 (CEECRRRKARCDRVRPQCGICADAGRTC) constitute a DNA-binding region (zn(2)-C6 fungal-type). Residues 285–308 (HDDETSPNENSGSCPSVSPSTTQN) are disordered. A compositionally biased stretch (polar residues) spans 291–308 (PNENSGSCPSVSPSTTQN).

It localises to the nucleus. In terms of biological role, transcription factor that acts as the main regulator of the gene cluster that mediates the biosynthesis of sorbicillinoids, a diverse group of yellow secondary metabolites that restrict growth of competing pathogenic fungi but not of bacteria. The polypeptide is Sorbicillinoid biosynthetic cluster transcription factor 1 (Penicillium rubens (strain ATCC 28089 / DSM 1075 / NRRL 1951 / Wisconsin 54-1255) (Penicillium chrysogenum)).